A 244-amino-acid polypeptide reads, in one-letter code: 7-cyano-7-deazaguanine synthase (244 aa).

14-24 (FSGGQDSATCV) is an ATP binding site. Positions 202, 217, 220, and 223 each coordinate Zn(2+).

The protein belongs to the QueC family. Requires Zn(2+) as cofactor.

The enzyme catalyses 7-carboxy-7-deazaguanine + NH4(+) + ATP = 7-cyano-7-deazaguanine + ADP + phosphate + H2O + H(+). It participates in purine metabolism; 7-cyano-7-deazaguanine biosynthesis. Functionally, catalyzes the ATP-dependent conversion of 7-carboxy-7-deazaguanine (CDG) to 7-cyano-7-deazaguanine (preQ(0)). The chain is 7-cyano-7-deazaguanine synthase from Burkholderia multivorans (strain ATCC 17616 / 249).